A 250-amino-acid polypeptide reads, in one-letter code: Probable transcriptional regulatory protein Cphamn1_0542 (250 aa).

Belongs to the TACO1 family.

It localises to the cytoplasm. This chain is Probable transcriptional regulatory protein Cphamn1_0542, found in Chlorobium phaeobacteroides (strain BS1).